The chain runs to 537 residues: Cytochrome P450 27C1 (537 aa).

Cysteine 483 is a heme binding site.

This sequence belongs to the cytochrome P450 family. It depends on heme as a cofactor. In terms of tissue distribution, expressed in the dorsal third of retinal pigment epithelium, but not in the ventral counterpart (at protein level).

Its subcellular location is the membrane. It carries out the reaction all-trans-retinol + 2 reduced [adrenodoxin] + O2 + 2 H(+) = all-trans-3,4-didehydroretinol + 2 oxidized [adrenodoxin] + 2 H2O. Functionally, efficiently catalyzes the conversion of all-trans retinol (also called vitamin A1, the precursor of 11-cis retinal) to 3,4-didehydroretinol (also called vitamin A2, the precursor of 11-cis 3,4-didehydroretinal), also acts on all-trans retinal and all-trans retinoic acid. The replacement of 11-cis retinal chromophore in photopigments with 11-cis 3,4-didehydroretinal enhances sensitivity to long-wavelength light. This may improve vision in fresh water which is often turbid. This is Cytochrome P450 27C1 (cyp27c1) from Aquarana catesbeiana (American bullfrog).